The primary structure comprises 130 residues: Large ribosomal subunit protein bL17 (130 aa).

The protein belongs to the bacterial ribosomal protein bL17 family. In terms of assembly, part of the 50S ribosomal subunit. Contacts protein L32.

The protein is Large ribosomal subunit protein bL17 of Shewanella loihica (strain ATCC BAA-1088 / PV-4).